A 402-amino-acid polypeptide reads, in one-letter code: Homoserine O-acetyltransferase (402 aa).

Positions 38–359 (NAVLVCHALT…HGHDAFLVEP (322 aa)) constitute an AB hydrolase-1 domain. Ser146 acts as the Nucleophile in catalysis. Arg217 serves as a coordination point for substrate. Residues Asp319 and His352 contribute to the active site. Asp353 serves as a coordination point for substrate.

The protein belongs to the AB hydrolase superfamily. MetX family. Homodimer.

It is found in the cytoplasm. It catalyses the reaction L-homoserine + acetyl-CoA = O-acetyl-L-homoserine + CoA. The protein operates within amino-acid biosynthesis; L-methionine biosynthesis via de novo pathway; O-acetyl-L-homoserine from L-homoserine: step 1/1. In terms of biological role, transfers an acetyl group from acetyl-CoA to L-homoserine, forming acetyl-L-homoserine. In Haloarcula marismortui (strain ATCC 43049 / DSM 3752 / JCM 8966 / VKM B-1809) (Halobacterium marismortui), this protein is Homoserine O-acetyltransferase.